Consider the following 545-residue polypeptide: Dual specificity calcium/calmodulin-dependent 3',5'-cyclic nucleotide phosphodiesterase 1A (545 aa).

Calmodulin-binding stretches follow at residues 24–44 (TEKMWQRLKGILRCLVKQLEK) and 114–137 (EKPKFRSIVHAVQAGIFVERMYRK). The PDEase domain maps to 142-522 (VGLTYPAAVI…ERWKELAAQG (381 aa)). Catalysis depends on His219, which acts as the Proton donor. The Zn(2+) site is built by His223, His259, Asp260, and Asp366. Asp260 serves as a coordination point for Mg(2+). The interval 526–545 (LHKNSEELGNTEEKHADTRP) is disordered.

It belongs to the cyclic nucleotide phosphodiesterase family. PDE1 subfamily. Homodimer. Interacts with YWHAZ. It depends on Zn(2+) as a cofactor. Mg(2+) serves as cofactor. Expressed in brain, kidney and testis.

The protein resides in the cell projection. The protein localises to the cilium. It localises to the flagellum. The enzyme catalyses a nucleoside 3',5'-cyclic phosphate + H2O = a nucleoside 5'-phosphate + H(+). It carries out the reaction 3',5'-cyclic GMP + H2O = GMP + H(+). It catalyses the reaction 3',5'-cyclic AMP + H2O = AMP + H(+). Type I PDE are activated by the binding of calmodulin in the presence of Ca(2+). Its activity is regulated as follows. Activated by the binding of calmodulin in the presence of Ca(2+). Its function is as follows. Calcium/calmodulin-dependent cyclic nucleotide phosphodiesterase with a dual specificity for the second messengers cGMP and cAMP, which are key regulators of many important physiological processes. Has a higher efficiency with cGMP compared to cAMP. The protein is Dual specificity calcium/calmodulin-dependent 3',5'-cyclic nucleotide phosphodiesterase 1A of Mus musculus (Mouse).